Consider the following 156-residue polypeptide: Small ribosomal subunit protein uS7 (156 aa).

Belongs to the universal ribosomal protein uS7 family. As to quaternary structure, part of the 30S ribosomal subunit. Contacts proteins S9 and S11.

Its function is as follows. One of the primary rRNA binding proteins, it binds directly to 16S rRNA where it nucleates assembly of the head domain of the 30S subunit. Is located at the subunit interface close to the decoding center, probably blocks exit of the E-site tRNA. The protein is Small ribosomal subunit protein uS7 of Leuconostoc mesenteroides subsp. mesenteroides (strain ATCC 8293 / DSM 20343 / BCRC 11652 / CCM 1803 / JCM 6124 / NCDO 523 / NBRC 100496 / NCIMB 8023 / NCTC 12954 / NRRL B-1118 / 37Y).